A 1113-amino-acid chain; its full sequence is Coiled-coil domain-containing protein 158 (1113 aa).

Positions 1–14 (MESKAWESNNEDLL) are enriched in polar residues. The disordered stretch occupies residues 1 to 26 (MESKAWESNNEDLLSSSGVTSNGGSS). The span at 15-26 (SSSGVTSNGGSS) shows a compositional bias: low complexity. Coiled-coil stretches lie at residues 72–183 (GKEH…LSHE) and 243–833 (VEDQ…QEQE). 2 disordered regions span residues 848-902 (LQGP…DPTR) and 955-1062 (CHRS…IETT). Polar residues-rich tracts occupy residues 867-894 (ASVTRSHSNVPSSQSTASFLSHHSTKAN), 955-974 (CHRSNNSLRDSTEGSKSSET), 994-1017 (FTFTSAASPSVKNSASRSFNSSPK), 1024-1040 (LLTSSVEGSIGSTSQYR), and 1053-1062 (DSQSPPIETT). The stretch at 1061–1113 (TTGKTCRKLQNRLESLQTLVEDLQLKNQAMSSMIRNQEKRIQKVKDQEKMLLK) forms a coiled coil.

This chain is Coiled-coil domain-containing protein 158 (CCDC158), found in Homo sapiens (Human).